The following is a 98-amino-acid chain: Co-chaperonin GroES 4 (98 aa).

It belongs to the GroES chaperonin family. In terms of assembly, heptamer of 7 subunits arranged in a ring. Interacts with the chaperonin GroEL.

It localises to the cytoplasm. In terms of biological role, together with the chaperonin GroEL, plays an essential role in assisting protein folding. The GroEL-GroES system forms a nano-cage that allows encapsulation of the non-native substrate proteins and provides a physical environment optimized to promote and accelerate protein folding. GroES binds to the apical surface of the GroEL ring, thereby capping the opening of the GroEL channel. This chain is Co-chaperonin GroES 4, found in Mesorhizobium japonicum (strain LMG 29417 / CECT 9101 / MAFF 303099) (Mesorhizobium loti (strain MAFF 303099)).